The following is a 646-amino-acid chain: UvrABC system protein C (646 aa).

Residues 16–95 (VEPGVYRFRD…IKEFDPRFNV (80 aa)) enclose the GIY-YIG domain. Residues 208 to 243 (DRFARALEQQMNAAAEQLDFERAARLRDDLSALKRA) form the UVR domain.

Belongs to the UvrC family. As to quaternary structure, interacts with UvrB in an incision complex.

Its subcellular location is the cytoplasm. Its function is as follows. The UvrABC repair system catalyzes the recognition and processing of DNA lesions. UvrC both incises the 5' and 3' sides of the lesion. The N-terminal half is responsible for the 3' incision and the C-terminal half is responsible for the 5' incision. The protein is UvrABC system protein C of Mycobacterium bovis (strain BCG / Pasteur 1173P2).